Reading from the N-terminus, the 421-residue chain is Polymerase delta-interacting protein 3 (421 aa).

Position 2 is an N-acetylalanine (Ala2). Ser5 is modified (phosphoserine). Arg33 bears the Omega-N-methylarginine mark. A phosphoserine mark is found at Ser44 and Ser127. Position 140 is a phosphothreonine (Thr140). A Glycyl lysine isopeptide (Lys-Gly) (interchain with G-Cter in SUMO2) cross-link involves residue Lys200. 3 positions are modified to phosphoserine: Ser204, Ser215, and Ser217. Lys223 is covalently cross-linked (Glycyl lysine isopeptide (Lys-Gly) (interchain with G-Cter in SUMO2)). Phosphoserine is present on Ser244. Residue Lys248 forms a Glycyl lysine isopeptide (Lys-Gly) (interchain with G-Cter in SUMO2) linkage. Ser275 carries the phosphoserine modification. The 72-residue stretch at 280–351 (TKMTVNNLHP…QPMKCNLHMN (72 aa)) folds into the RRM domain. Residues 370 to 379 (SMKKESELPR) show a composition bias toward basic and acidic residues. Residues 370-393 (SMKKESELPRRVNSASSSNPPAEV) form a disordered region. Lys372 is covalently cross-linked (Glycyl lysine isopeptide (Lys-Gly) (interchain with G-Cter in SUMO2)). Residues Ser383 and Ser385 each carry the phosphoserine; by RPS6KB1 modification. Lys418 participates in a covalent cross-link: Glycyl lysine isopeptide (Lys-Gly) (interchain with G-Cter in SUMO2).

As to quaternary structure, interacts with POLD2. Interacts with NCBP1 and EIF4A3. Associates with the multiprotein exon junction complex (EJC). Interacts with RPS6KB1 (activated). Interacts with ERH. Interacts with THOC2, DDX39B and ZC3H11A; the interactions are ATP-dependent and indicative for an association with the TREX complex. Phosphorylated at Ser-383 and Ser-385 by RPS6KB1.

The protein resides in the nucleus. The protein localises to the nucleus speckle. It is found in the cytoplasm. Its function is as follows. Is involved in regulation of translation. Is preferentially associated with CBC-bound spliced mRNA-protein complexes during the pioneer round of mRNA translation. Contributes to enhanced translational efficiency of spliced over nonspliced mRNAs. Recruits activated ribosomal protein S6 kinase beta-1 I/RPS6KB1 to newly synthesized mRNA. Involved in nuclear mRNA export; probably mediated by association with the TREX complex. In Homo sapiens (Human), this protein is Polymerase delta-interacting protein 3 (POLDIP3).